Here is a 556-residue protein sequence, read N- to C-terminus: MKTDIEIAQSVELQPIVDVVKKVGIDYDDLELYGKYKAKLSFDKIREVEKNPVGKLILVTAINPTPAGEGKSTITIGLADALNKIGKKTMIAIREPSLGPVMGIKGGAAGGGHAQVLPMEDINLHFTGDMHAITTANNALSALIDNHLHQGNALGIDQRRIIWKRVVDLNDRALRHVTVGLGSPVNGIPREDGFDITVASEIMAILCLATDIEDLKKRLANIVIGYRYDRTPVYVRDLEVEGALALVLKDAIKPNLVQTIYGTPAFVHGGPFANIAHGCNSVLATSTALRLADYTVTEAGFGADLGAEKFLDIKTPNLPTSPDAVVIVATLRALKMNGGVAKDALTEENVEAVRAGFANLKRHVENIRKFGIPAVVAINEFVSDTEAEVATLKELCAEIGVPVELASVWADGAEGGVTLAETVVKTIAEEPAHYTRLYDNDLSIEEKIEKIVTEIYRGSKVNFEKKAQTQIREIVKNSWDKLPICMAKTQYSFSDNPASLGAPENFEITIRELVPKLGAGFIVALTGDVMTMPGLPKRPAALNMDVAADGTAIGLF.

Residue 65 to 72 (TPAGEGKS) coordinates ATP.

This sequence belongs to the formate--tetrahydrofolate ligase family.

It catalyses the reaction (6S)-5,6,7,8-tetrahydrofolate + formate + ATP = (6R)-10-formyltetrahydrofolate + ADP + phosphate. It participates in one-carbon metabolism; tetrahydrofolate interconversion. The polypeptide is Formate--tetrahydrofolate ligase 2 (Streptococcus sanguinis (strain SK36)).